Reading from the N-terminus, the 325-residue chain is Aldo-keto reductase family 1 member A1 (325 aa).

Position 2 is an N-acetylalanine (A2). S4 is subject to Phosphoserine. Residues G11–G20, T21, and W22 contribute to the NADP(+) site. S38 carries the phosphoserine modification. An NADP(+)-binding site is contributed by D45. The active-site Proton donor is Y50. An N6-acetyllysine; alternate modification is found at K127. K127 bears the N6-succinyllysine; alternate mark. NADP(+)-binding residues include S162, N163, S211, L213, S215, S216, K263, S264, V265, T266, R269, and N273. At S211 the chain carries Phosphoserine.

This sequence belongs to the aldo/keto reductase family. In terms of assembly, monomer.

It is found in the cytoplasm. The protein localises to the cytosol. The protein resides in the apical cell membrane. It catalyses the reaction a primary alcohol + NADP(+) = an aldehyde + NADPH + H(+). It carries out the reaction L-gulonate + NADP(+) = aldehydo-D-glucuronate + NADPH + H(+). The catalysed reaction is L-gulono-1,4-lactone + NADP(+) = D-glucurono-3,6-lactone + NADPH + H(+). The enzyme catalyses allyl alcohol + NADP(+) = acrolein + NADPH + H(+). It catalyses the reaction glycerol + NADP(+) = D-glyceraldehyde + NADPH + H(+). It carries out the reaction glycerol + NADP(+) = L-glyceraldehyde + NADPH + H(+). The catalysed reaction is hydroxyacetone + NADP(+) = methylglyoxal + NADPH + H(+). The enzyme catalyses 3-deoxyfructose + NADP(+) = 3-deoxyglucosone + NADPH + H(+). It catalyses the reaction (R)-mevalonate + NADP(+) = (R)-mevaldate + NADPH + H(+). It carries out the reaction pyridine 3-methanol + NADP(+) = pyridine-3-carbaldehyde + NADPH + H(+). The catalysed reaction is S-nitroso-CoA + NADPH + H(+) = sulfinamide-CoA + NADP(+). The enzyme catalyses S-nitrosoglutathione + NADPH + H(+) = S-(hydroxysulfenamide)glutathione + NADP(+). Its function is as follows. Catalyzes the NADPH-dependent reduction of a wide variety of carbonyl-containing compounds to their corresponding alcohols. Displays enzymatic activity towards endogenous metabolites such as aromatic and aliphatic aldehydes, ketones, monosaccharides and bile acids, with a preference for negatively charged substrates, such as glucuronate and succinic semialdehyde. Plays an important role in ascorbic acid biosynthesis by catalyzing the reduction of D-glucuronic acid and D-glucurono-gamma-lactone. Functions as a detoxifiying enzyme by reducing a range of toxic aldehydes. Reduces methylglyoxal and 3-deoxyglucosone, which are present at elevated levels under hyperglycemic conditions and are cytotoxic. Involved also in the detoxification of lipid-derived aldehydes like acrolein. Plays a role in the activation of procarcinogens, such as polycyclic aromatic hydrocarbon trans-dihydrodiols, and in the metabolism of various xenobiotics and drugs. Also acts as an inhibitor of protein S-nitrosylation by mediating degradation of S-nitroso-coenzyme A (S-nitroso-CoA), a cofactor required to S-nitrosylate proteins. S-nitroso-CoA reductase activity is involved in reprogramming intermediary metabolism in renal proximal tubules, notably by inhibiting protein S-nitrosylation of isoform 2 of PKM (PKM2). Also acts as a S-nitroso-glutathione reductase by catalyzing the NADPH-dependent reduction of S-nitrosoglutathione. Displays no reductase activity towards retinoids. This chain is Aldo-keto reductase family 1 member A1, found in Bos taurus (Bovine).